The following is a 71-amino-acid chain: Conotoxin Bu24 (71 aa).

A signal peptide spans 1–21 (MGMRMMVTVFLLVVLATTVVS). Positions 22 to 44 (LRSNRASDGRRGIVNKLNDLVPK) are excised as a propeptide. Position 70 is an asparagine amide (Asn70).

It belongs to the conotoxin A superfamily. In terms of processing, contains 3 disulfide bonds. They are not indicated here, since framework IV presents two different connectivities (I-V, II-III, IV-VI and I-III, II-V, IV-VI). In terms of tissue distribution, expressed by the venom duct.

The protein localises to the secreted. The protein is Conotoxin Bu24 of Conus bullatus (Bubble cone).